The chain runs to 105 residues: UPF0145 protein lpg0197 (105 aa).

The protein belongs to the UPF0145 family.

This is UPF0145 protein lpg0197 from Legionella pneumophila subsp. pneumophila (strain Philadelphia 1 / ATCC 33152 / DSM 7513).